The following is a 487-amino-acid chain: WD repeat, SAM and U-box domain-containing protein 1 (487 aa).

7 WD repeats span residues 10–47 (SHRDDVNCVAFSGDLLATCSADKSICVYSSRDFSELPF), 52–93 (GHGY…AVLE), 95–134 (PGRSPVRVCAFSPDSSHLVSGGSDGSIALWDFTSRTLRRT), 137–176 (VNDTSIVACSFTPCGQMFITGSTYGDLRLWDLNMNHLHAE), 179–227 (AHDL…SAGI), 237–276 (GQSAPVLSCAYSPDGQMLVSGSVDKTVTVYQADEGVLLYT), and 279–318 (QHDRYVTACAFSPTAPLIATGSMDKSVNIWRMEEGSSAQG). Positions 347-411 (WSEEEVLAWL…MKKIEELKMV (65 aa)) constitute an SAM domain. A U-box domain is found at 416 to 487 (GTPDEFLCPI…MAIFRWSTSQ (72 aa)).

The polypeptide is WD repeat, SAM and U-box domain-containing protein 1 (wdsub1) (Danio rerio (Zebrafish)).